We begin with the raw amino-acid sequence, 508 residues long: Asparagine--tRNA ligase (508 aa).

This sequence belongs to the class-II aminoacyl-tRNA synthetase family. In terms of assembly, homodimer.

It is found in the cytoplasm. It catalyses the reaction tRNA(Asn) + L-asparagine + ATP = L-asparaginyl-tRNA(Asn) + AMP + diphosphate + H(+). The polypeptide is Asparagine--tRNA ligase (Streptococcus suis (strain 05ZYH33)).